Reading from the N-terminus, the 293-residue chain is MATH domain and coiled-coil domain-containing protein At3g58400 (293 aa).

Residues 3–126 (RSRSQNLITE…NGELKIVAEI (124 aa)) form the MATH domain. Residues 227 to 285 (KLDWLENKLYEVAQKKEDDEAGETRLREMEEKLKDLKLKCSKMEALVEEEKAKVSAAKA) adopt a coiled-coil conformation.

The protein is MATH domain and coiled-coil domain-containing protein At3g58400 of Arabidopsis thaliana (Mouse-ear cress).